Reading from the N-terminus, the 1032-residue chain is Unconventional myosin-Ih (1032 aa).

The Myosin motor domain maps to 12-701 (GVQDFVLLDA…TLFATEDAFE (690 aa)). 105 to 112 (GESGAGKT) contributes to the ATP binding site. Ser-365 is modified (phosphoserine). Residues 578–600 (LSSLLETLISKEPSYIRCIKPND) form an actin-binding region. IQ domains lie at 704 to 726 (KHQLVARIQATYKRCLGRREYVK) and 727 to 756 (KRQAAIKLEAHWRGALARKAIQRRKWAVRI). One can recognise a TH1 domain in the interval 855–1029 (KDGYTESLNQ…NGQLTVVSVR (175 aa)).

Belongs to the TRAFAC class myosin-kinesin ATPase superfamily. Myosin family.

Functionally, myosins are actin-based motor molecules with ATPase activity. Unconventional myosins serve in intracellular movements. Their highly divergent tails are presumed to bind to membranous compartments, which would be moved relative to actin filaments. The protein is Unconventional myosin-Ih (MYO1H) of Homo sapiens (Human).